A 150-amino-acid chain; its full sequence is 16.6 kDa heat shock protein (150 aa).

The sHSP domain maps to 31-150; sequence AERCPVLTNV…PQLKAIPISG (120 aa).

This sequence belongs to the small heat shock protein (HSP20) family. May form oligomeric structures.

It localises to the cytoplasm. The chain is 16.6 kDa heat shock protein (HSP16.6) from Oryza sativa subsp. japonica (Rice).